The chain runs to 475 residues: Splicing factor U2AF 65 kDa subunit (475 aa).

Residues 1 to 90 (MSDFDEFERQ…RHEKKKKVRK (90 aa)) are disordered. S2 is modified (N-acetylserine). Position 2 is a phosphoserine (S2). Residues 2 to 93 (SDFDEFERQL…KKKKVRKYWD (92 aa)) are required for interaction with PRPF19. The segment covering 7–22 (FERQLNENKQERDKEN) has biased composition (basic and acidic residues). K15 carries the 5-hydroxylysine; by JMJD6; alternate modification. K15 is covalently cross-linked (Glycyl lysine isopeptide (Lys-Gly) (interchain with G-Cter in SUMO2); alternate). A necessary and sufficient to stimulate pre-mRNAs 3'-end cleavage in a CFIm complex-dependent manner region spans residues 17–47 (ERDKENRHRKRSHSRSRSRDRKRRSRSRDRR). The segment covering 23–46 (RHRKRSHSRSRSRDRKRRSRSRDR) has biased composition (basic residues). Over residues 47-56 (RNRDQRSASR) the composition is skewed to basic and acidic residues. Residue K70 forms a Glycyl lysine isopeptide (Lys-Gly) (interchain with G-Cter in SUMO2); alternate linkage. At K70 the chain carries N6-acetyllysine; alternate. S79 carries the phosphoserine modification. Over residues 79-89 (SPRHEKKKKVR) the composition is skewed to basic residues. RRM domains are found at residues 149 to 231 (RRLY…RPHD), 259 to 337 (HKLF…RASV), and 385 to 466 (LPEE…YCDP). K276 carries the 5-hydroxylysine; by JMJD6 modification. S294 is subject to Phosphoserine.

It belongs to the splicing factor SR family. As to quaternary structure, interacts with U2AF1L4. Heterodimer with U2AF1. Binds unphosphorylated SF1. Interacts with SCAF11 and SNW1. Interacts with ZRSR2/U2AF1-RS2. Interacts with RBM17. Interacts with PRPF19; the interaction is direct. Interacts with POLR2A (via the C-terminal domain); recruits PRPF19 and the Prp19 complex to the pre-mRNA. Interacts with KHDC4 (Isoform 2). Interacts with ZRSR2. Interacts with the SF3B complex composed of SF3B1, SF3B2, SF3B3, SF3B4, SF3B5, SF3B6 and PHF5A. Interacts (via N-terminus) with CPSF7 (via C-terminus); this interaction stimulates pre-mRNA 3'-end processing by promoting the recruitment of the CFIm complex to cleavage and polyadenylation signals. Interacts with ARGLU1; interaction may be involved in ARGLU1-mediated modulation of alternative splicing. Post-translationally, lysyl-hydroxylation at Lys-15 and Lys-276 affects the mRNA splicing activity of the protein, leading to regulate some, but not all, alternative splicing events.

Its subcellular location is the nucleus. In terms of biological role, plays a role in pre-mRNA splicing and 3'-end processing. By recruiting PRPF19 and the PRP19C/Prp19 complex/NTC/Nineteen complex to the RNA polymerase II C-terminal domain (CTD), and thereby pre-mRNA, may couple transcription to splicing. Induces cardiac troponin-T (TNNT2) pre-mRNA exon inclusion in muscle. Regulates the TNNT2 exon 5 inclusion through competition with MBNL1. Binds preferentially to a single-stranded structure within the polypyrimidine tract of TNNT2 intron 4 during spliceosome assembly. Required for the export of mRNA out of the nucleus, even if the mRNA is encoded by an intron-less gene. Represses the splicing of MAPT/Tau exon 10. Positively regulates pre-mRNA 3'-end processing by recruiting the CFIm complex to cleavage and polyadenylation signals. The polypeptide is Splicing factor U2AF 65 kDa subunit (U2AF2) (Homo sapiens (Human)).